Reading from the N-terminus, the 305-residue chain is Glycine--tRNA ligase alpha subunit (305 aa).

This sequence belongs to the class-II aminoacyl-tRNA synthetase family. Tetramer of two alpha and two beta subunits.

The protein resides in the cytoplasm. The enzyme catalyses tRNA(Gly) + glycine + ATP = glycyl-tRNA(Gly) + AMP + diphosphate. The sequence is that of Glycine--tRNA ligase alpha subunit from Streptococcus pneumoniae (strain P1031).